The chain runs to 235 residues: Glucosamine-6-phosphate deaminase (235 aa).

Aspartate 62 serves as the catalytic Proton acceptor; for enolization step. Asparagine 128 (for ring-opening step) is an active-site residue. Histidine 130 acts as the Proton acceptor; for ring-opening step in catalysis. Catalysis depends on glutamate 135, which acts as the For ring-opening step.

The protein belongs to the glucosamine/galactosamine-6-phosphate isomerase family. NagB subfamily.

The catalysed reaction is alpha-D-glucosamine 6-phosphate + H2O = beta-D-fructose 6-phosphate + NH4(+). It functions in the pathway amino-sugar metabolism; N-acetylneuraminate degradation; D-fructose 6-phosphate from N-acetylneuraminate: step 5/5. Its function is as follows. Catalyzes the reversible isomerization-deamination of glucosamine 6-phosphate (GlcN6P) to form fructose 6-phosphate (Fru6P) and ammonium ion. The chain is Glucosamine-6-phosphate deaminase from Streptococcus pneumoniae (strain JJA).